Consider the following 126-residue polypeptide: C-type natriuretic peptide (126 aa).

An N-terminal signal peptide occupies residues 1 to 23 (MHLSQLLACALLLTLLSLRPSEA). Residues 19-72 (RPSEAKPGAPPKVPRTPPGEEVAEPQAAGGGQKKGDKTPGGGGANLKGDRSRLL) form a disordered region. A propeptide spanning residues 24–73 (KPGAPPKVPRTPPGEEVAEPQAAGGGQKKGDKTPGGGGANLKGDRSRLLR) is cleaved from the precursor. Pro residues predominate over residues 26–35 (GAPPKVPRTP). Positions 46 to 63 (AGGGQKKGDKTPGGGGAN) are enriched in gly residues. Residues C110 and C126 are joined by a disulfide bond.

The protein belongs to the natriuretic peptide family. Post-translationally, degraded by IDE (in vitro).

Its subcellular location is the secreted. Functionally, hormone which plays a role in endochondral ossification through regulation of cartilaginous growth plate chondrocytes proliferation and differentiation. May also be vasoactive and natriuretic. Acts by specifically binding and stimulating NPR2 to produce cGMP. Binds the clearance receptor NPR3. The chain is C-type natriuretic peptide (NPPC) from Sus scrofa (Pig).